The following is a 59-amino-acid chain: Potassium channel toxin alpha-KTx 4.5 (59 aa).

A signal peptide spans 1 to 22 (MKAFYGVLIIFILISMLDLSQQ). 3 disulfides stabilise this stretch: Cys29/Cys50, Cys35/Cys55, and Cys39/Cys57. The segment at 48–55 (GKCMNGKC) is interaction with Ca(2+)-activated K(+) channels.

In terms of tissue distribution, expressed by the venom gland.

The protein resides in the secreted. In terms of biological role, inhibits with low potency Kv1.1/KCNA1, Kv1.2/KCNA2, Kv1.3/KCNA3 and Kv11.1/KCNH2/ERG1 voltage-gated potassium channels. In Tityus costatus (Brazilian scorpion), this protein is Potassium channel toxin alpha-KTx 4.5.